Here is a 253-residue protein sequence, read N- to C-terminus: Imidazole glycerol phosphate synthase subunit HisF (253 aa).

Catalysis depends on residues D11 and D130.

The protein belongs to the HisA/HisF family. In terms of assembly, heterodimer of HisH and HisF.

It is found in the cytoplasm. The catalysed reaction is 5-[(5-phospho-1-deoxy-D-ribulos-1-ylimino)methylamino]-1-(5-phospho-beta-D-ribosyl)imidazole-4-carboxamide + L-glutamine = D-erythro-1-(imidazol-4-yl)glycerol 3-phosphate + 5-amino-1-(5-phospho-beta-D-ribosyl)imidazole-4-carboxamide + L-glutamate + H(+). Its pathway is amino-acid biosynthesis; L-histidine biosynthesis; L-histidine from 5-phospho-alpha-D-ribose 1-diphosphate: step 5/9. Its function is as follows. IGPS catalyzes the conversion of PRFAR and glutamine to IGP, AICAR and glutamate. The HisF subunit catalyzes the cyclization activity that produces IGP and AICAR from PRFAR using the ammonia provided by the HisH subunit. In Methylibium petroleiphilum (strain ATCC BAA-1232 / LMG 22953 / PM1), this protein is Imidazole glycerol phosphate synthase subunit HisF.